We begin with the raw amino-acid sequence, 1015 residues long: DNA ligase 3 (1015 aa).

The PARP-type zinc-finger motif lies at 94-186 (FCVDYAKRGT…QISQHIADLS (93 aa)). Positions 106, 109, 140, and 143 each coordinate Zn(2+). Residues Ser211, Ser217, Ser228, and Ser244 each carry the phosphoserine modification. The segment at 229 to 255 (GFSAAKPNNSEQAPSSPAPGTSLSASK) is disordered. Positions 234 to 253 (KPNNSEQAPSSPAPGTSLSA) are enriched in polar residues. Interaction with DNA stretches follow at residues 279–282 (PSYN), 323–328 (VYNLND), 393–396 (TKED), and 426–432 (KMNSGAK). Glu511 is a binding site for ATP. Residue Lys513 is the N6-AMP-lysine intermediate of the active site. ATP contacts are provided by Arg518 and Arg533. Mg(2+) contacts are provided by Glu565 and Glu660. The ATP site is built by Lys665, Arg676, and Lys680. Residues 849–926 (DEASPTTGGS…KSSPVKVGMK (78 aa)) are disordered. Residues 854-884 (TTGGSSGENEGTAGSAGPCKGPPSKSSASAK) are compositionally biased toward low complexity. The residue at position 919 (Ser919) is a Phosphoserine. Positions 939–1015 (VLLDVFTGVR…IRKRRLIAPC (77 aa)) constitute a BRCT domain.

The protein belongs to the ATP-dependent DNA ligase family. In terms of assembly, isoform 3 interacts (via BRCT domain) with the nuclear DNA-repair protein XRCC1. Interacts with POLG. Interacts with POLB. Mg(2+) is required as a cofactor. In terms of tissue distribution, the alpha isoform is expressed in all tissues, while the beta isoform is expressed only in the testis.

It is found in the nucleus. It catalyses the reaction ATP + (deoxyribonucleotide)n-3'-hydroxyl + 5'-phospho-(deoxyribonucleotide)m = (deoxyribonucleotide)n+m + AMP + diphosphate.. The alpha isoform interacts with DNA-repair protein XRCC1 and can correct defective DNA strand-break repair and sister chromatid exchange following treatment with ionizing radiation and alkylating agents. The beta isoform does not interact with XRCC1 and may be specifically involved in the completion of homologous recombination events that occur during meiotic prophase. This is DNA ligase 3 (Lig3) from Mus musculus (Mouse).